Reading from the N-terminus, the 293-residue chain is Peptidoglycan deacetylase (293 aa).

Residues aspartate 14, histidine 86, and histidine 90 each coordinate Zn(2+). A NodB homology domain is found at proline 29–valine 276.

It belongs to the polysaccharide deacetylase family. In terms of assembly, homotetramer.

The enzyme catalyses Deacetylation of xylans and xylo-oligosaccharides.. Catalyzes the N-deacetylation of peptidoglycan (PG), an important mechanism that appears to confer lysozyme resistance and to mitigate host immune detection; this likely contributes to pathogen persistence in the host. The exact nature of the residue in PG that is deacetylated has not been determined. Is also able to catalyze the deacetylation of acetylated xylan, and, to a lesser extent, that of chitin and chitosan. Therefore, this enzyme might play a role during infection, considering that xylan-containing carbohydrate structures are among those commonly consumed by humans. In Helicobacter pylori (strain ATCC 700392 / 26695) (Campylobacter pylori), this protein is Peptidoglycan deacetylase (pgdA).